We begin with the raw amino-acid sequence, 445 residues long: Methionine aminopeptidase 2 (445 aa).

Positions 1 to 80 (MAAQVASGVG…TSKVQTEPPR (80 aa)) are disordered. The span at 57–71 (AKKKKKKTKKKKKGT) shows a compositional bias: basic residues. H195 is a substrate binding site. D215, D226, and H295 together coordinate a divalent metal cation. H303 contributes to the substrate binding site. E331 and E426 together coordinate a divalent metal cation.

It belongs to the peptidase M24A family. Methionine aminopeptidase eukaryotic type 2 subfamily. The cofactor is Co(2+). Zn(2+) is required as a cofactor. Mn(2+) serves as cofactor. It depends on Fe(2+) as a cofactor.

It localises to the cytoplasm. The enzyme catalyses Release of N-terminal amino acids, preferentially methionine, from peptides and arylamides.. Its function is as follows. Cotranslationally removes the N-terminal methionine from nascent proteins. The N-terminal methionine is often cleaved when the second residue in the primary sequence is small and uncharged (Met-Ala-, Cys, Gly, Pro, Ser, Thr, or Val). This chain is Methionine aminopeptidase 2, found in Paracoccidioides brasiliensis (strain Pb18).